We begin with the raw amino-acid sequence, 58 residues long: T-cell receptor gamma alternate reading frame protein (58 aa).

Detected at low levels in the ductal cells of the salivary gland but not in the acinar cells (at protein level). Expressed in endometrium (at protein level). Expressed in epithelial cells within the acinar ducts of the prostate.

This is T-cell receptor gamma alternate reading frame protein from Homo sapiens (Human).